The chain runs to 177 residues: Large ribosomal subunit protein uL6 (177 aa).

It belongs to the universal ribosomal protein uL6 family. In terms of assembly, part of the 50S ribosomal subunit.

Functionally, this protein binds to the 23S rRNA, and is important in its secondary structure. It is located near the subunit interface in the base of the L7/L12 stalk, and near the tRNA binding site of the peptidyltransferase center. This chain is Large ribosomal subunit protein uL6, found in Rhizorhabdus wittichii (strain DSM 6014 / CCUG 31198 / JCM 15750 / NBRC 105917 / EY 4224 / RW1) (Sphingomonas wittichii).